A 457-amino-acid polypeptide reads, in one-letter code: uncharacterized protein (457 aa).

The signal sequence occupies residues 1 to 18 (MKLLISLLWSIFFSIVYS). Residues 19 to 173 (EKTLLNFKHY…GGLPASQFPR (155 aa)) lie on the Lumenal side of the membrane. The helical transmembrane segment at 174–194 (MPISGGITIAYSVILALWMFF) threads the bilayer. Topologically, residues 195–207 (RFQYKHSIVTVQK) are cytoplasmic. Residues 208–228 (AIMFLLIFSCAQQAVTSIVLD) traverse the membrane as a helical segment. At 229 to 243 (TENLRNRGNFTWLGE) the chain is on the lumenal side. Residues 244–264 (TLVSILFACQLVLDLALLLIL) form a helical membrane-spanning segment. Topologically, residues 265–284 (SWGYTRYSTNMRDRLFTEAK) are cytoplasmic. A helical transmembrane segment spans residues 285 to 305 (IPLIICFFALFVVRFFAITIQ). The Lumenal portion of the chain corresponds to 306-314 (SIHLGLWFC). A helical membrane pass occupies residues 315 to 335 (FFFLTACISALYILFGAFVAL). The Cytoplasmic segment spans residues 336-358 (PSTLRALVEQRYYTLHSIYKIFR). The helical transmembrane segment at 359-379 (IMVLCGVVTIFSFSLVALIFC) threads the bilayer. At 380 to 457 (SNTNNNSTNK…EEDIRADKSK (78 aa)) the chain is on the lumenal side.

It belongs to the LU7TM family.

It localises to the endoplasmic reticulum membrane. This is an uncharacterized protein from Schizosaccharomyces pombe (strain 972 / ATCC 24843) (Fission yeast).